The chain runs to 354 residues: Guanine nucleotide-binding protein G(o) subunit alpha (354 aa).

Residue Gly-2 is the site of N-myristoyl glycine attachment. Cys-3 is lipidated: S-palmitoyl cysteine. A G-alpha domain is found at 32–354 (KDVKLLLLGA…ANNLRGCGLY (323 aa)). Residues 35-48 (KLLLLGAGESGKST) are G1 motif. Glu-43, Lys-46, Ser-47, Thr-48, Ser-152, Leu-176, Arg-177, Thr-178, and Arg-179 together coordinate GTP. Mg(2+) is bound at residue Ser-47. The segment at 174-182 (DILRTRVKT) is G2 motif. Thr-182 lines the Mg(2+) pocket. A G3 motif region spans residues 197 to 206 (FRLFDVGGQR). Residue Gln-205 is modified to 5-glutamyl histamine. The interval 266 to 273 (ILFLNKKD) is G4 motif. GTP contacts are provided by Asn-270, Asp-273, and Cys-325. The interval 324–329 (TCATDT) is G5 motif. Cys-351 carries the S-palmitoyl cysteine lipid modification.

The protein belongs to the G-alpha family. G(i/o/t/z) subfamily. In terms of assembly, g proteins are composed of 3 units; alpha, beta and gamma. The alpha chain contains the guanine nucleotide binding site. Forms a complex with GNB1 and GNG3. Interacts with RGS14. Interacts with RGS16. Interacts with RGS19. Interacts (when palmitoylated) with ADGRG3. In terms of processing, histaminylated at Gln-205 residues by TGM2.

Its subcellular location is the cell membrane. The protein localises to the membrane. It carries out the reaction GTP + H2O = GDP + phosphate + H(+). The GTPase activity is promoted by GTPAse activators, such as RGS14, RGS16 and RGS19. Guanine nucleotide-binding proteins (G proteins) function as transducers downstream of G protein-coupled receptors (GPCRs) in numerous signaling cascades. The alpha chain contains the guanine nucleotide binding site and alternates between an active, GTP-bound state and an inactive, GDP-bound state. Signaling by an activated GPCR promotes GDP release and GTP binding. The alpha subunit has a low GTPase activity that converts bound GTP to GDP, thereby terminating the signal. Both GDP release and GTP hydrolysis are modulated by numerous regulatory proteins. Signaling is mediated via effector proteins, such as adenylate cyclase. Inhibits adenylate cyclase activity, leading to decreased intracellular cAMP levels. In Bos taurus (Bovine), this protein is Guanine nucleotide-binding protein G(o) subunit alpha (GNAO1).